We begin with the raw amino-acid sequence, 93 residues long: Islet amyloid polypeptide (93 aa).

A signal peptide spans 1 to 23; the sequence is MRCISRLPAVLLILSVALGHLRA. A propeptide spanning residues 24 to 35 is cleaved from the precursor; the sequence is TPVGSGTNPQVD. A disulfide bridge links Cys39 with Cys44. At Tyr74 the chain carries Tyrosine amide. The propeptide occupies 78–93; that stretch reads NVAEDPNRESLDFLLL.

This sequence belongs to the calcitonin family. As to quaternary structure, can form homodimers. Interacts with IDE and INS. Interaction with INS inhibits homodimerization and fibril formation. In terms of tissue distribution, abundant in the islets of Langerhans but is not present in the brain or seven other tissues examined.

The protein localises to the secreted. Amylin/IAPP is a glucoregulatory peptide hormone that plays an important role in the regulation of energy homeostasis. Selectively inhibits insulin-stimulated glucose utilization and glycogen deposition in muscle, while not affecting adipocyte glucose metabolism. IAPP function is mediated by the CALCR-RAMPs (AMYRs) receptor complexes. Amylin can also bind CALCR receptor in the absence of RAMPs, although it is more selective for AMYRs. This Rattus norvegicus (Rat) protein is Islet amyloid polypeptide.